The sequence spans 782 residues: MLSLRVACLILSLASTVWTADTGTTSEFIEAGGDIRGPRIVERQPSQCKETDWPFCSDEDWNHKCPSGCRMKGLIDEANQDFTNRINKLKNSLFDFQKNNKDSNSLTRNIMEYLRGDFANANNFDNTFGQVSEDLRRRIQILKRKVIEKAQQIQVLQKDVRDQLIDMKRLEVDIDIKIRSCKGSCSRSVSREINLKDYEGQQKQLEQVIAKDLLPAKDRQYLPAIKMSPVPDLVPGSFKSQLQEGPPEWKALTEMRQMRMELERPGKDGASRGDLPGDSRGDSATRGPGSKIENPMTPGHGGSGYWRPGSSGSGSDGNWGSGTTGSDDTGTWGAGSSRPSSGSGNLKPSNPDWGEFSEFGGSSSPATRKEYHTGKLVTSKGDKELLIGNEKVTSTGTSTTRRSCSKTITKTVLGNDGHREVVKEVVTSDDGSDCGDGMDLGLTHSFSGRLDELSRMHPELGSFYDSRFGSLTSNFKEFGSKTSDSDIFTDIENPSSHVPEFSSSSKTSTVRKQVTKSYKMADEAASEAHQEGDTRTTKRGRARTMRDCDDVLQTHPSGAQNGIFSIKLPGSSKIFSVYCDQETSLGGWLLIQQRMDGSLNFNRTWQDYKRGFGSLNDKGEGEFWLGNDYLHLLTLRGSVLRVELEDWAGKEAYAEYHFRVGSEAEGYALQVSSYQGTAGDALMEGSVEEGTEYTSHSNMQFSTFDRDADQWEENCAEVYGGGWWYNSCQAANLNGIYYPGGTYDPRNNSPYEIENGVLWVPFRGADYSLWAVRMKIRPLVGQ.

The signal sequence occupies residues 1–19 (MLSLRVACLILSLASTVWT). A coiled-coil region spans residues 68–547 (GCRMKGLIDE…KRGRARTMRD (480 aa)). A compositionally biased stretch (basic and acidic residues) spans 264 to 283 (RPGKDGASRGDLPGDSRGDS). Residues 264 to 374 (RPGKDGASRG…PATRKEYHTG (111 aa)) are disordered. At serine 279 the chain carries Phosphoserine. The span at 311-323 (SGSGSDGNWGSGT) shows a compositional bias: gly residues. Composition is skewed to low complexity over residues 324–344 (TGSDDTGTWGAGSSRPSSGSG) and 354–364 (GEFSEFGGSSS). Serine 326 bears the Phosphoserine mark. A disulfide bond links cysteine 404 and cysteine 434. Serine 470 is modified (phosphoserine). Residue proline 499 is modified to 4-hydroxyproline; by P4HA1. A compositionally biased stretch (basic and acidic residues) spans 522-536 (DEAASEAHQEGDTRT). Residues 522 to 542 (DEAASEAHQEGDTRTTKRGRA) are disordered. Phosphoserine is present on serine 526. A Fibrinogen C-terminal domain is found at 539–780 (RGRARTMRDC…AVRMKIRPLV (242 aa)). The N-linked (GlcNAc...) asparagine glycan is linked to asparagine 602. Ca(2+) contacts are provided by aspartate 707, aspartate 709, tryptophan 711, and glutamate 713. Cysteine 715 and cysteine 728 are disulfide-bonded.

Heterohexamer; disulfide linked. Contains 2 sets of 3 non-identical chains (alpha, beta and gamma). The 2 heterotrimers are in head to head conformation with the N-termini in a small central domain. In terms of processing, conversion of fibrinogen to fibrin is triggered by thrombin, which cleaves fibrinopeptides A and B from alpha and beta chains, and thus exposes the N-terminal polymerization sites responsible for the formation of the soft clot. The soft clot is converted into the hard clot by factor XIIIA which catalyzes the epsilon-(gamma-glutamyl)lysine cross-linking between gamma chains (stronger) and between alpha chains (weaker) of different monomers. Forms F13A-mediated cross-links between a glutamine and the epsilon-amino group of a lysine residue, forming fibronectin-fibrinogen heteropolymers. Post-translationally, phosphorylated by FAM20C in the extracellular medium.

The protein localises to the secreted. In terms of biological role, cleaved by the protease thrombin to yield monomers which, together with fibrinogen beta (FGB) and fibrinogen gamma (FGG), polymerize to form an insoluble fibrin matrix. Fibrin has a major function in hemostasis as one of the primary components of blood clots. In addition, functions during the early stages of wound repair to stabilize the lesion and guide cell migration during re-epithelialization. Was originally thought to be essential for platelet aggregation, based on in vitro studies using anticoagulated blood. However, subsequent studies have shown that it is not absolutely required for thrombus formation in vivo. Enhances expression of SELP in activated platelets via an ITGB3-dependent pathway. Maternal fibrinogen is essential for successful pregnancy. Fibrin deposition is also associated with infection, where it protects against IFNG-mediated hemorrhage. May also facilitate the immune response via both innate and T-cell mediated pathways. This is Fibrinogen alpha chain (Fga) from Rattus norvegicus (Rat).